Consider the following 801-residue polypeptide: Vacuolar transporter chaperone complex subunit 4 (801 aa).

The Cytoplasmic portion of the chain corresponds to 1 to 692 (MPFSKAWRSA…MLKWTEHATR (692 aa)). Lysine 215, arginine 286, arginine 288, lysine 312, lysine 325, and arginine 391 together coordinate ATP. A Mn(2+)-binding site is contributed by glutamate 441. Lysine 473 is a catalytic residue. A helical transmembrane segment spans residues 693–713 (LGLVGLGVIQFGNSMTLPGDV). Topologically, residues 714–723 (TQLSSFWRAN) are vacuolar. The helical transmembrane segment at 724 to 744 (FHIVLGIALVLVALMTLMYAL) threads the bilayer. Over 745 to 768 (MTFKARSRRVYARKKIRFDDSWGP) the chain is Cytoplasmic. The helical transmembrane segment at 769 to 789 (TVLTVFLAFGICVIAMMHILG) threads the bilayer. Over 790-801 (RYGPMLTGDDNF) the chain is Vacuolar.

Belongs to the VTC4 family. In terms of assembly, the VTC core complex is an integral membrane heterooligomer composed of at least the catalytic subunit vtc4 and the accessory subunits vtc1 and vtc2. vtc1 is a small membrane protein without hydrophilic domain. Vtc2 and vtc4 are related and have 2 hydrophilic domains that face the cytosol, an N-terminal SPX domain and the central core domain. The central core in vtc4 is the catalytic domain. The cofactor is Mn(2+).

The protein resides in the acidocalcisome membrane. The enzyme catalyses [phosphate](n) + ATP = [phosphate](n+1) + ADP. With respect to regulation, activity of the enzyme is Mn(2+)-dependent and enhanced in the presence of pyrophosphate (PPi). Functionally, component of a polyphosphate synthase complex that utilizes ATP to synthesize and translocate polyphosphate to acidocalcisomes in epimastigotes, insect-stages of Trypanosoma brucei. Catalytic subunit of the vacuolar transporter chaperone (VTC) complex. The VTC complex acts as a vacuolar polyphosphate polymerase that catalyzes the synthesis of inorganic polyphosphate (polyP) via transfer of phosphate from ATP to a growing polyP chain, releasing ADP. VTC exposes its catalytic domain vtc4 to the cytosol, where the growing polyP chain winds through a tunnel-shaped pocket, integrating cytoplasmic polymer synthesis with polyP membrane translocation. The VTC complex carries 9 vacuolar transmembrane domains, which are likely to constitute the translocation channel into the organelle lumen. PolyP synthesis is tightly coupled to its transport into the vacuole lumen, in order to avoid otherwise toxic intermediates in the cytosol, and it depends on the proton gradient across the membrane, formed by V-ATPase. The VTC complex also plays a role in vacuolar membrane fusion. Essential for infection and parasite survival in the mammalian host. The chain is Vacuolar transporter chaperone complex subunit 4 from Trypanosoma cruzi (strain CL Brener).